A 130-amino-acid chain; its full sequence is ATP synthase epsilon chain (130 aa).

The protein belongs to the ATPase epsilon chain family. As to quaternary structure, F-type ATPases have 2 components, CF(1) - the catalytic core - and CF(0) - the membrane proton channel. CF(1) has five subunits: alpha(3), beta(3), gamma(1), delta(1), epsilon(1). CF(0) has three main subunits: a, b and c.

Its subcellular location is the cell membrane. Functionally, produces ATP from ADP in the presence of a proton gradient across the membrane. This is ATP synthase epsilon chain (atpC) from Mycoplasmoides gallisepticum (strain R(low / passage 15 / clone 2)) (Mycoplasma gallisepticum).